The following is an 89-amino-acid chain: Small ribosomal subunit protein uS15 (89 aa).

Belongs to the universal ribosomal protein uS15 family. As to quaternary structure, part of the 30S ribosomal subunit. Forms a bridge to the 50S subunit in the 70S ribosome, contacting the 23S rRNA.

Functionally, one of the primary rRNA binding proteins, it binds directly to 16S rRNA where it helps nucleate assembly of the platform of the 30S subunit by binding and bridging several RNA helices of the 16S rRNA. Its function is as follows. Forms an intersubunit bridge (bridge B4) with the 23S rRNA of the 50S subunit in the ribosome. In Mycobacterium sp. (strain JLS), this protein is Small ribosomal subunit protein uS15.